Reading from the N-terminus, the 141-residue chain is Putative pre-16S rRNA nuclease (141 aa).

Belongs to the YqgF nuclease family.

It localises to the cytoplasm. In terms of biological role, could be a nuclease involved in processing of the 5'-end of pre-16S rRNA. This is Putative pre-16S rRNA nuclease from Sodalis glossinidius (strain morsitans).